Consider the following 95-residue polypeptide: DNA-directed RNA polymerase subunit Rpo11 (95 aa).

It belongs to the archaeal Rpo11/eukaryotic RPB11/RPC19 RNA polymerase subunit family. Part of the RNA polymerase complex.

It is found in the cytoplasm. It catalyses the reaction RNA(n) + a ribonucleoside 5'-triphosphate = RNA(n+1) + diphosphate. Functionally, DNA-dependent RNA polymerase (RNAP) catalyzes the transcription of DNA into RNA using the four ribonucleoside triphosphates as substrates. This is DNA-directed RNA polymerase subunit Rpo11 from Pyrococcus horikoshii (strain ATCC 700860 / DSM 12428 / JCM 9974 / NBRC 100139 / OT-3).